The primary structure comprises 118 residues: Basic phospholipase A2 PA-5 (118 aa).

Disulfide bonds link cysteine 11–cysteine 71, cysteine 27–cysteine 117, cysteine 29–cysteine 45, cysteine 44–cysteine 98, cysteine 51–cysteine 91, cysteine 60–cysteine 84, and cysteine 78–cysteine 89. Tyrosine 28, glycine 30, and glycine 32 together coordinate Ca(2+). Residue histidine 48 is part of the active site. Residue aspartate 49 coordinates Ca(2+). Aspartate 92 is a catalytic residue.

Belongs to the phospholipase A2 family. Group I subfamily. D49 sub-subfamily. Ca(2+) serves as cofactor. Expressed by the venom gland.

Its subcellular location is the secreted. The enzyme catalyses a 1,2-diacyl-sn-glycero-3-phosphocholine + H2O = a 1-acyl-sn-glycero-3-phosphocholine + a fatty acid + H(+). In terms of biological role, PLA2 catalyzes the calcium-dependent hydrolysis of the 2-acyl groups in 3-sn-phosphoglycerides. The chain is Basic phospholipase A2 PA-5 from Pseudechis australis (Mulga snake).